Consider the following 511-residue polypeptide: Glucans biosynthesis protein G (511 aa).

An N-terminal signal peptide occupies residues M1–A22.

Belongs to the OpgD/OpgG family.

The protein resides in the periplasm. The protein operates within glycan metabolism; osmoregulated periplasmic glucan (OPG) biosynthesis. Involved in the biosynthesis of osmoregulated periplasmic glucans (OPGs). This is Glucans biosynthesis protein G from Shigella boydii serotype 4 (strain Sb227).